The primary structure comprises 101 residues: Small ribosomal subunit protein uS14A (101 aa).

Composition is skewed to basic and acidic residues over residues 28–44 (KETI…RAEA) and 61–70 (RNRDAADGRP). Positions 28–74 (KETIRRPSSSEDERAEARAALQRLPRDASPVRLRNRDAADGRPRGHL) are disordered.

It belongs to the universal ribosomal protein uS14 family. As to quaternary structure, part of the 30S ribosomal subunit. Contacts proteins S3 and S10.

Binds 16S rRNA, required for the assembly of 30S particles and may also be responsible for determining the conformation of the 16S rRNA at the A site. This chain is Small ribosomal subunit protein uS14A, found in Rhodococcus jostii (strain RHA1).